The following is a 194-amino-acid chain: Cupin-domain-containing oxidoreductase virC (194 aa).

The Cupin type-2 domain maps to 106 to 175 (IDFAPNVISP…GTLPGRMMWV (70 aa)).

Belongs to the virC family.

It functions in the pathway secondary metabolite biosynthesis. Functionally, cupin-domain-containing oxidoreductase; part of the gene cluster that mediates the biosynthesis of virensols and trichoxide, fungal natural products that contain or are derived from a salicylaldehyde core. The pathway begins with the synthesis of the reduced chain in virensol C by the highly reducing polyketide synthase virA via condensation of one acetate and 8 malonate units. VirA has interesting programming rules since the first 2 ketides are fully reduced, the 3 following ketides undergo beta-dehydration, and the last 3 ketides are only reduced to beta-hydroxys to yield the trihydroxy portion. The production of aldehyde virensol C by virA alone is surprising, since virA does not contain a reductase (R) domain that is typically associated with reductive product release in HRPKS. The cupin-domain enzyme virC is involved in enhancing virA product turnover. The short-chain dehydrogenase virB then oxidizes the C-7 alcohol of virensol C to a ketone, yielding virensol D. Virensol D is further transformed to salicylaldehyde 5-deoxyaurocitrin by the short-chain dehydrogenase virD. VirD catalyzes the dehydrogenation of C-3 to form the beta-ketone aldehyde, which is followed by the generation of the nucleophilic C-2 that is required for the intramolecular aldol condensation between C-2 and C-7, itself followed by dehydration and aromatization which leads to salicylaldehyde 5-deoxyaurocitrin. While the dehydrogenation of virensol D is definitely catalyzed by virD, the aldol condensation and dehydration may be uncatalyzed or assisted by virD. The short chain dehydrogenase virG then converts salicylaldehyde 5-deoxyaurocitrin into virensol B which is further hydroxylated by the cytochrome P450 monooxygenase virE to yield the hydroquinone virensol A. VirI then may oxidize virensol A to form the quinone, while virH performs the epoxidation. Finally, the two remaining short-chain dehydrogenases, virK and virL, are probably responsible for reducing the ketones to the corresponding alcohols to furnish the epoxycyclohexanol structure in trichoxide. The protein is Cupin-domain-containing oxidoreductase virC of Hypocrea virens (strain Gv29-8 / FGSC 10586) (Gliocladium virens).